A 205-amino-acid chain; its full sequence is Ribosomal RNA small subunit methyltransferase G (205 aa).

Residues Gly-66, Phe-71, 119-120, and Arg-135 each bind S-adenosyl-L-methionine; that span reads IE.

This sequence belongs to the methyltransferase superfamily. RNA methyltransferase RsmG family.

It is found in the cytoplasm. The catalysed reaction is guanosine(527) in 16S rRNA + S-adenosyl-L-methionine = N(7)-methylguanosine(527) in 16S rRNA + S-adenosyl-L-homocysteine. Its function is as follows. Specifically methylates the N7 position of guanine in position 527 of 16S rRNA. The chain is Ribosomal RNA small subunit methyltransferase G from Rhizobium etli (strain ATCC 51251 / DSM 11541 / JCM 21823 / NBRC 15573 / CFN 42).